Reading from the N-terminus, the 452-residue chain is UDP-N-acetylmuramate--L-alanine ligase (452 aa).

Residue Gly110–Thr116 participates in ATP binding.

It belongs to the MurCDEF family.

The protein localises to the cytoplasm. It carries out the reaction UDP-N-acetyl-alpha-D-muramate + L-alanine + ATP = UDP-N-acetyl-alpha-D-muramoyl-L-alanine + ADP + phosphate + H(+). Its pathway is cell wall biogenesis; peptidoglycan biosynthesis. Functionally, cell wall formation. This chain is UDP-N-acetylmuramate--L-alanine ligase, found in Francisella philomiragia subsp. philomiragia (strain ATCC 25017 / CCUG 19701 / FSC 153 / O#319-036).